The following is a 501-amino-acid chain: Adenylosuccinate synthetase 2, chloroplastic (501 aa).

Residues 87–93 (GDEGKGK) and 115–117 (GHT) contribute to the GTP site. Residue Asp88 is the Proton acceptor of the active site. Mg(2+) contacts are provided by Asp88 and Gly115. Residues 88 to 91 (DEGK), 113 to 116 (NAGH), Thr205, Arg219, Gln300, Thr315, and Arg379 each bind IMP. His116 serves as the catalytic Proton donor. Residue 375–381 (NITGRPR) participates in substrate binding. GTP-binding positions include Arg381, 407–409 (KLD), and 490–492 (GIG).

This sequence belongs to the adenylosuccinate synthetase family. Homodimer. Mg(2+) is required as a cofactor.

It localises to the plastid. The protein resides in the chloroplast. The catalysed reaction is IMP + L-aspartate + GTP = N(6)-(1,2-dicarboxyethyl)-AMP + GDP + phosphate + 2 H(+). Its pathway is purine metabolism; AMP biosynthesis via de novo pathway; AMP from IMP: step 1/2. Plays an important role in the de novo pathway and in the salvage pathway of purine nucleotide biosynthesis. Catalyzes the first committed step in the biosynthesis of AMP from IMP. The protein is Adenylosuccinate synthetase 2, chloroplastic of Capsicum frutescens (Cayenne pepper).